The sequence spans 239 residues: tRNA (guanine-N(1)-)-methyltransferase (239 aa).

S-adenosyl-L-methionine contacts are provided by residues Gly-109 and Ile-133 to Leu-138. Disordered regions lie at residues Pro-163 to Pro-187 and Gln-217 to Arg-239. 2 stretches are compositionally biased toward basic and acidic residues: residues Ser-165–Glu-180 and Gln-217–Leu-226.

It belongs to the RNA methyltransferase TrmD family. Homodimer.

The protein resides in the cytoplasm. The enzyme catalyses guanosine(37) in tRNA + S-adenosyl-L-methionine = N(1)-methylguanosine(37) in tRNA + S-adenosyl-L-homocysteine + H(+). Specifically methylates guanosine-37 in various tRNAs. This chain is tRNA (guanine-N(1)-)-methyltransferase, found in Mycolicibacterium paratuberculosis (strain ATCC BAA-968 / K-10) (Mycobacterium paratuberculosis).